The primary structure comprises 282 residues: Bifunctional protein FolD 1 (282 aa).

NADP(+) is bound by residues 167–169 (GRS) and serine 192.

It belongs to the tetrahydrofolate dehydrogenase/cyclohydrolase family. In terms of assembly, homodimer.

The enzyme catalyses (6R)-5,10-methylene-5,6,7,8-tetrahydrofolate + NADP(+) = (6R)-5,10-methenyltetrahydrofolate + NADPH. The catalysed reaction is (6R)-5,10-methenyltetrahydrofolate + H2O = (6R)-10-formyltetrahydrofolate + H(+). Its pathway is one-carbon metabolism; tetrahydrofolate interconversion. Functionally, catalyzes the oxidation of 5,10-methylenetetrahydrofolate to 5,10-methenyltetrahydrofolate and then the hydrolysis of 5,10-methenyltetrahydrofolate to 10-formyltetrahydrofolate. The sequence is that of Bifunctional protein FolD 1 from Colwellia psychrerythraea (strain 34H / ATCC BAA-681) (Vibrio psychroerythus).